Consider the following 129-residue polypeptide: Small ribosomal subunit protein uS11c (129 aa).

Belongs to the universal ribosomal protein uS11 family. In terms of assembly, part of the 30S ribosomal subunit.

Its subcellular location is the plastid. The protein resides in the chloroplast. The polypeptide is Small ribosomal subunit protein uS11c (Pleurastrum terricola (Filamentous green alga)).